The primary structure comprises 772 residues: Phenylalanine--tRNA ligase beta subunit (772 aa).

Residues 40-158 (IKPSTNLVFA…DHYKTPNQIF (119 aa)) form the tRNA-binding domain. Residues 397-468 (SVHNVIKNKI…KKISIQEIKP (72 aa)) form the B5 domain. Asp-446, Asp-452, Glu-455, and Asp-456 together coordinate Mg(2+). The region spanning 691–772 (SMYHDVIRDI…QEVNNYLKQF (82 aa)) is the FDX-ACB domain.

It belongs to the phenylalanyl-tRNA synthetase beta subunit family. Type 1 subfamily. Tetramer of two alpha and two beta subunits. It depends on Mg(2+) as a cofactor.

Its subcellular location is the cytoplasm. It carries out the reaction tRNA(Phe) + L-phenylalanine + ATP = L-phenylalanyl-tRNA(Phe) + AMP + diphosphate + H(+). This chain is Phenylalanine--tRNA ligase beta subunit (pheT), found in Ureaplasma parvum serovar 3 (strain ATCC 700970).